The chain runs to 37 residues: Cytochrome b6-f complex subunit 5 (37 aa).

The chain crosses the membrane as a helical span at residues Leu-5–Ala-25.

The protein belongs to the PetG family. As to quaternary structure, the 4 large subunits of the cytochrome b6-f complex are cytochrome b6, subunit IV (17 kDa polypeptide, PetD), cytochrome f and the Rieske protein, while the 4 small subunits are PetG, PetL, PetM and PetN. The complex functions as a dimer.

The protein resides in the cellular thylakoid membrane. Its function is as follows. Component of the cytochrome b6-f complex, which mediates electron transfer between photosystem II (PSII) and photosystem I (PSI), cyclic electron flow around PSI, and state transitions. PetG is required for either the stability or assembly of the cytochrome b6-f complex. This chain is Cytochrome b6-f complex subunit 5, found in Thermosynechococcus vestitus (strain NIES-2133 / IAM M-273 / BP-1).